Reading from the N-terminus, the 904-residue chain is MKRKMLWSSLIVILFVCILFLNKIVDFIINVEWYKEVGYLTVYFTKLIAICKLMIPLFIIIYISIVLYWRSLRLSIIKYRRAFEVNNDKVKNEKRIFIIVNLIVSFLFSYAFAATYWYRILQFNNSVPFNIKDPILNLDVSFYIFKLPLIQSLHSMILSLIIFLGLITLVTYFTLSVKDKVIWRNFKKDSGKIDILNSGITRFAGKQLAVLAALVMICVSIGYILKCIGLVYSQKGVTFGAGYTDAHVSLLLYKIIAAASIISAVIIFISILVSKVKPIIVSITVIVALILIKSLSYTVVQNFIVKSNQKTLEQPYIKYNIDYTRKAFNIENIDANPFQVKDNLTSQDIDNNMDTINNIRINSFEPTLEFYNQVQIIRYYYKFNNIDVDRYNINGKFNQIFIGTREINTKAIDPNTWQNRHLIYTHGYGIVMNKVNSVTSEGQPNFVIKDMPPQNSTDIKLDNARIYFGEKTDDYAIVDTKLKEFDYPKGSENATNNYDGSAGIKLGFINRILFAINQKDINFLLSRDILKESKILINRSIKDRVSKIAPFLNYDSDPYIVMSGGKLYWILDGYTVSDRYPFAQPQNNLNYIRNSVKVTVDAENGNVNFYIMDKSDPIVQSYAKIFPDLFKDINKLPSDIVQHFKYPKDLFNIQCSVLGKYHVTDPGVFYSGEDLWEVAKNQKQVSGEKYSMESSYMVMKLPNEQKEEMILLQYFNMRDKDNMVALFGARMDGENYGKMVLYKFPAEKTVYSPYLFKQKLNQDTTISSQLSLWNKDGSEVQFGDTIIVPINQSLVYVEPMYLRASGKEGIPEMKRVIVSYSDKMVLAESIDDALQQIFSYKQDYNQENSNESQIETPSYDINAEKLKEAKSLYEQALEAQKNGDWSKYGENIKKLGDIIDSLQK.

The next 7 helical transmembrane spans lie at 9–29 (SLIV…DFII), 47–67 (LIAI…SIVL), 96–116 (IFII…AATY), 157–177 (ILSL…TLSV), 208–228 (LAVL…LKCI), 253–273 (YKII…SILV), and 279–299 (IIVS…SYTV).

The protein belongs to the UPF0182 family.

Its subcellular location is the cell membrane. In Clostridium kluyveri (strain ATCC 8527 / DSM 555 / NBRC 12016 / NCIMB 10680 / K1), this protein is UPF0182 protein CKL_0015.